Consider the following 437-residue polypeptide: MSGLDGVKRTTPLQTHSIIISDQVPSDQDAHQYLRLRDQSEATQVMAEPGEGGSETVALPPPPPSEEGGVPQDAAGRGGTPQIRVVGGRGHVAIKAGQEEGQPPAEGLAAASVVMAADRSLKKGVQGGEKALEICGAQRSASELTAGAEAEAEEVKTGKCATVSAAVAERESAEVVKEGLAEKEVMEEQMEVEEQPPEGEEIEVAEEDRLEEEAREEEGPWPLHEALRMDPLEAIQLELDTVNAQADRAFQQLEHKFGRMRRHYLERRNYIIQNIPGFWMTAFRNHPQLSAMIRGQDAEMLRYITNLEVKELRHPRTGCKFKFFFRRNPYFRNKLIVKEYEVRSSGRVVSLSTPIIWRRGHEPQSFIRRNQDLICSFFTWFSDHSLPESDKIAEIIKEDLWPNPLQYYLLREGVRRARRRPLREPVEIPRPFGFQSG.

Residues 1–81 (MSGLDGVKRT…QDAAGRGGTP (81 aa)) form a disordered region. The segment covering 11–26 (TPLQTHSIIISDQVPS) has biased composition (polar residues). The segment covering 28–40 (QDAHQYLRLRDQS) has biased composition (basic and acidic residues). Lys-156 is covalently cross-linked (Glycyl lysine isopeptide (Lys-Gly) (interchain with G-Cter in SUMO2)).

This sequence belongs to the nucleosome assembly protein (NAP) family. Ubiquitinated by the CRL2(APPBP2) complex, which recognizes the Arg-Xaa-Xaa-Gly sequence at the C-terminus, leading to its degradation. Expressed in testis, ovary, liver, spleen, brain, kidney, prostate, lung, liver, and heart.

It localises to the nucleus. The protein localises to the nucleolus. This chain is Testis-specific Y-encoded-like protein 1 (TSPYL1), found in Homo sapiens (Human).